Reading from the N-terminus, the 344-residue chain is MVKLVLKGNNLSKLIKMSVHREKIDLAKLPHHYDGPVTLAVIGGTGLYDLPNLHPVARLTISTPWGFPSGSITISKTDSGFPVAFLARHGAHHDLLPSDVPSRANIAALKRLGVKAIIAFSAVGSLQQEIKPRDFVLPTQIIDRTKGIRPSTFFEKGFVAHAMFGEPFDLKLNKLISDAIPSKGFLEGFDTDGTPVLHTKENTNNGEDLTIICMEGPQFSTRAESRLYRSWGGSVINMSVLPEAKLAREAEIAYQMICMSTDYDSWNESEEPVTVETVVGNLKANSANACKLAAKLIDEFAAKGGEIGKDLQGSMKYAVSTSPHGVKKELLEKMHFLFPGYWEV.

Residues Thr-45, 88–89 (RH), and 121–122 (SA) contribute to the phosphate site. Met-238 lines the substrate pocket. A phosphate-binding site is contributed by Ser-239. Substrate is bound at residue 262-264 (DYD).

Belongs to the PNP/MTAP phosphorylase family. MTAP subfamily. Homotrimer.

It localises to the cytoplasm. It is found in the nucleus. It catalyses the reaction S-methyl-5'-thioadenosine + phosphate = 5-(methylsulfanyl)-alpha-D-ribose 1-phosphate + adenine. It participates in amino-acid biosynthesis; L-methionine biosynthesis via salvage pathway; S-methyl-5-thio-alpha-D-ribose 1-phosphate from S-methyl-5'-thioadenosine (phosphorylase route): step 1/1. In terms of biological role, catalyzes the reversible phosphorylation of S-methyl-5'-thioadenosine (MTA) to adenine and 5-methylthioribose-1-phosphate. Involved in the breakdown of MTA, a major by-product of polyamine biosynthesis. Responsible for the first step in the methionine salvage pathway after MTA has been generated from S-adenosylmethionine. Has broad substrate specificity with 6-aminopurine nucleosides as preferred substrates. The protein is S-methyl-5'-thioadenosine phosphorylase of Candida albicans (strain SC5314 / ATCC MYA-2876) (Yeast).